Consider the following 146-residue polypeptide: Hemoglobin subunit beta (146 aa).

Positions histidine 2 to histidine 146 constitute a Globin domain. Histidine 63 and histidine 92 together coordinate heme b.

Belongs to the globin family. As to quaternary structure, heterotetramer of two alpha chains and two beta chains. In terms of tissue distribution, red blood cells.

Functionally, involved in oxygen transport from the lung to the various peripheral tissues. This chain is Hemoglobin subunit beta (HBB), found in Phalacrocorax carbo (Great cormorant).